Consider the following 439-residue polypeptide: Probable serine/threonine-protein kinase WNK6 (439 aa).

Positions 1-30 (MMPPKPAAEDVADEQPEPPDEDPDVAEADP) are disordered. The segment covering 10–27 (DVADEQPEPPDEDPDVAE) has biased composition (acidic residues). One can recognise a Protein kinase domain in the interval 35–293 (LRYREIIGSG…ASELLKSPFL (259 aa)). Residues 116-119 (TELF) and K166 contribute to the ATP site. Catalysis depends on D183, which acts as the Proton acceptor.

This sequence belongs to the protein kinase superfamily. Ser/Thr protein kinase family. WNK subfamily.

The catalysed reaction is L-seryl-[protein] + ATP = O-phospho-L-seryl-[protein] + ADP + H(+). The enzyme catalyses L-threonyl-[protein] + ATP = O-phospho-L-threonyl-[protein] + ADP + H(+). In Oryza sativa subsp. japonica (Rice), this protein is Probable serine/threonine-protein kinase WNK6 (WNK6).